Reading from the N-terminus, the 362-residue chain is Chorismate synthase (362 aa).

Arg47 provides a ligand contact to NADP(+). FMN is bound by residues 124-126 (RAS), Gly286, 301-305 (KPTAT), and Arg327.

This sequence belongs to the chorismate synthase family. In terms of assembly, homotetramer. FMNH2 serves as cofactor.

The catalysed reaction is 5-O-(1-carboxyvinyl)-3-phosphoshikimate = chorismate + phosphate. Its pathway is metabolic intermediate biosynthesis; chorismate biosynthesis; chorismate from D-erythrose 4-phosphate and phosphoenolpyruvate: step 7/7. Its function is as follows. Catalyzes the anti-1,4-elimination of the C-3 phosphate and the C-6 proR hydrogen from 5-enolpyruvylshikimate-3-phosphate (EPSP) to yield chorismate, which is the branch point compound that serves as the starting substrate for the three terminal pathways of aromatic amino acid biosynthesis. This reaction introduces a second double bond into the aromatic ring system. The polypeptide is Chorismate synthase (Prochlorococcus marinus (strain SARG / CCMP1375 / SS120)).